Here is a 216-residue protein sequence, read N- to C-terminus: Somatotropin (216 aa).

Positions 1–26 (MAADSQTSRLLTFTLLCLLWPQEAGA) are cleaved as a signal peptide. Residue histidine 45 coordinates Zn(2+). The cysteines at positions 78 and 189 are disulfide-linked. Position 131 is a phosphoserine (serine 131). Glutamate 198 contacts Zn(2+). Cysteine 206 and cysteine 214 are disulfide-bonded.

The protein belongs to the somatotropin/prolactin family.

The protein localises to the secreted. Functionally, plays an important role in growth control. Its major role in stimulating body growth is to stimulate the liver and other tissues to secrete IGF1. It stimulates both the differentiation and proliferation of myoblasts. It also stimulates amino acid uptake and protein synthesis in muscle and other tissues. This Mesocricetus auratus (Golden hamster) protein is Somatotropin (GH1).